The following is a 333-amino-acid chain: Phosphate acyltransferase (333 aa).

This sequence belongs to the PlsX family. As to quaternary structure, homodimer. Probably interacts with PlsY.

It localises to the cytoplasm. The enzyme catalyses a fatty acyl-[ACP] + phosphate = an acyl phosphate + holo-[ACP]. It participates in lipid metabolism; phospholipid metabolism. Catalyzes the reversible formation of acyl-phosphate (acyl-PO(4)) from acyl-[acyl-carrier-protein] (acyl-ACP). This enzyme utilizes acyl-ACP as fatty acyl donor, but not acyl-CoA. In Thermoanaerobacterium thermosaccharolyticum (strain ATCC 7956 / DSM 571 / NCIMB 9385 / NCA 3814 / NCTC 13789 / WDCM 00135 / 2032) (Clostridium thermosaccharolyticum), this protein is Phosphate acyltransferase.